A 74-amino-acid chain; its full sequence is MDMVSLKFIGIGLMAIGMYGAALGVSNIFSSLLSSIARNPSAAENLQRMALIGAGLAEAMGLFSFVIAMLLIFS.

Helical transmembrane passes span 8 to 28 and 52 to 72; these read FIGI…VSNI and IGAG…MLLI.

Belongs to the ATPase C chain family. As to quaternary structure, F-type ATPases have 2 components, F(1) - the catalytic core - and F(0) - the membrane proton channel. F(1) has five subunits: alpha(3), beta(3), gamma(1), delta(1), epsilon(1). F(0) has three main subunits: a(1), b(2) and c(10-14). The alpha and beta chains form an alternating ring which encloses part of the gamma chain. F(1) is attached to F(0) by a central stalk formed by the gamma and epsilon chains, while a peripheral stalk is formed by the delta and b chains.

The protein resides in the cell inner membrane. In terms of biological role, f(1)F(0) ATP synthase produces ATP from ADP in the presence of a proton or sodium gradient. F-type ATPases consist of two structural domains, F(1) containing the extramembraneous catalytic core and F(0) containing the membrane proton channel, linked together by a central stalk and a peripheral stalk. During catalysis, ATP synthesis in the catalytic domain of F(1) is coupled via a rotary mechanism of the central stalk subunits to proton translocation. Key component of the F(0) channel; it plays a direct role in translocation across the membrane. A homomeric c-ring of between 10-14 subunits forms the central stalk rotor element with the F(1) delta and epsilon subunits. The chain is ATP synthase subunit c from Rickettsia felis (strain ATCC VR-1525 / URRWXCal2) (Rickettsia azadi).